A 573-amino-acid chain; its full sequence is Ribonuclease J (573 aa).

The disordered stretch occupies residues 1 to 29; the sequence is MENQERKPRRRRRRRPQEGSQGGPQDHVE. Zn(2+) is bound by residues His93, His95, Asp97, His98, His168, and Asp190. Substrate-binding positions include 259–261 and 390–394; these read ASH and HASGH. Residue His416 participates in Zn(2+) binding.

The protein belongs to the metallo-beta-lactamase superfamily. RNA-metabolizing metallo-beta-lactamase-like family. Bacterial RNase J subfamily. In terms of assembly, homodimer. May be a subunit of the RNA degradosome. Zn(2+) serves as cofactor.

The protein localises to the cytoplasm. Functionally, an RNase that has endonuclease and possibly 5'-3' exonuclease activity. Probably involved in maturation of rRNA and in some organisms also mRNA maturation and/or decay. In Thermus thermophilus (strain ATCC BAA-163 / DSM 7039 / HB27), this protein is Ribonuclease J.